The following is a 79-amino-acid chain: WAP four-disulfide core domain protein 10A (79 aa).

Residues 1–21 form the signal peptide; that stretch reads MAPQTLLPVLVLCVLLLQAQG. One can recognise a WAP domain in the interval 34–79; the sequence is LSPEIKVCQQQPKLYLCKHLCESHRDCQANNICCSTYCGNVCMSIL. Cystine bridges form between C41–C67, C50–C71, C54–C66, and C60–C75.

It is found in the secreted. The protein is WAP four-disulfide core domain protein 10A (WFDC10A) of Homo sapiens (Human).